We begin with the raw amino-acid sequence, 707 residues long: Trans-feruloyl-CoA synthase FCS1 (707 aa).

ATP-binding positions include histidine 267 and alanine 524–alanine 535. The ATP-grasp domain occupies lysine 498–valine 549.

In the N-terminal section; belongs to the acetate CoA ligase alpha subunit family. This sequence in the C-terminal section; belongs to the acetate CoA ligase beta subunit family. As to quaternary structure, homodimer.

The enzyme catalyses (E)-ferulate + ATP + CoA = (E)-feruloyl-CoA + ADP + phosphate. Catalyzes the formation of feruloyl-CoA, ADP and phosphate from ferulate, CoA and ATP. The sequence is that of Trans-feruloyl-CoA synthase FCS1 from Unknown prokaryotic organism.